The chain runs to 148 residues: Large ribosomal subunit protein uL11 (148 aa).

The interval Glu89–Thr108 is disordered.

It belongs to the universal ribosomal protein uL11 family. Part of the ribosomal stalk of the 50S ribosomal subunit. Interacts with L10 and the large rRNA to form the base of the stalk. L10 forms an elongated spine to which L12 dimers bind in a sequential fashion forming a multimeric L10(L12)X complex. One or more lysine residues are methylated.

Its function is as follows. Forms part of the ribosomal stalk which helps the ribosome interact with GTP-bound translation factors. The sequence is that of Large ribosomal subunit protein uL11 from Anaeromyxobacter sp. (strain Fw109-5).